Reading from the N-terminus, the 276-residue chain is Pantothenate synthetase (276 aa).

Residue 25 to 32 (MGYLHRGH) participates in ATP binding. Histidine 32 functions as the Proton donor in the catalytic mechanism. Glutamine 56 is a (R)-pantoate binding site. Residue glutamine 56 participates in beta-alanine binding. 143–146 (GEKD) contributes to the ATP binding site. Glutamine 149 is a binding site for (R)-pantoate. Residues valine 172 and 180–183 (LSSR) each bind ATP.

This sequence belongs to the pantothenate synthetase family. As to quaternary structure, homodimer.

It is found in the cytoplasm. The catalysed reaction is (R)-pantoate + beta-alanine + ATP = (R)-pantothenate + AMP + diphosphate + H(+). Its pathway is cofactor biosynthesis; (R)-pantothenate biosynthesis; (R)-pantothenate from (R)-pantoate and beta-alanine: step 1/1. Catalyzes the condensation of pantoate with beta-alanine in an ATP-dependent reaction via a pantoyl-adenylate intermediate. The polypeptide is Pantothenate synthetase (Thermus thermophilus (strain ATCC BAA-163 / DSM 7039 / HB27)).